Here is a 601-residue protein sequence, read N- to C-terminus: Glutathione-regulated potassium-efflux system protein KefB (601 aa).

13 consecutive transmembrane segments (helical) span residues 4–24, 29–49, 55–75, 87–107, 111–131, 152–172, 177–197, 207–227, 230–250, 262–282, 284–304, 324–344, and 356–376; these read ADLLTAGVLFLFAAVAAVPLA, IGAVLGYLLAGIAIGPWGLGF, EILHFSELGVVFLMFIIGLEL, IFGVGAAQVLLSAAVLAGLLM, FLWQAAVVGGIGLAMSSTAMA, VLLFQDLAVIPALALVPLLAG, HFDWFKVAMKVLAFAVMLIGG, FIAASGVREVFTAATLLLVLS, LFMDALGLSMALGTFIAGVLL, AIDPFKGLLLGLFFISVGMSL, LGVLYTHLLWVAASVVILVVI, MQFASVLSQGGEFAFVLFSTA, and ALLLVTVTLSMMTTPLLMKGI. Positions 400–519 constitute an RCK N-terminal domain; it reads KPQVIVVGFG…AGVTQFSRET (120 aa).

Belongs to the monovalent cation:proton antiporter 2 (CPA2) transporter (TC 2.A.37) family. KefB subfamily. As to quaternary structure, interacts with the regulatory subunit KefG.

The protein resides in the cell inner membrane. Functionally, pore-forming subunit of a potassium efflux system that confers protection against electrophiles. Catalyzes K(+)/H(+) antiport. The protein is Glutathione-regulated potassium-efflux system protein KefB of Salmonella dublin (strain CT_02021853).